The chain runs to 129 residues: Small ribosomal subunit protein uS11 (129 aa).

The protein belongs to the universal ribosomal protein uS11 family. As to quaternary structure, part of the 30S ribosomal subunit. Interacts with proteins S7 and S18. Binds to IF-3.

Functionally, located on the platform of the 30S subunit, it bridges several disparate RNA helices of the 16S rRNA. Forms part of the Shine-Dalgarno cleft in the 70S ribosome. The polypeptide is Small ribosomal subunit protein uS11 (Oceanobacillus iheyensis (strain DSM 14371 / CIP 107618 / JCM 11309 / KCTC 3954 / HTE831)).